The sequence spans 570 residues: Proline--tRNA ligase (570 aa).

Belongs to the class-II aminoacyl-tRNA synthetase family. ProS type 1 subfamily. In terms of assembly, homodimer.

It is found in the cytoplasm. It carries out the reaction tRNA(Pro) + L-proline + ATP = L-prolyl-tRNA(Pro) + AMP + diphosphate. In terms of biological role, catalyzes the attachment of proline to tRNA(Pro) in a two-step reaction: proline is first activated by ATP to form Pro-AMP and then transferred to the acceptor end of tRNA(Pro). As ProRS can inadvertently accommodate and process non-cognate amino acids such as alanine and cysteine, to avoid such errors it has two additional distinct editing activities against alanine. One activity is designated as 'pretransfer' editing and involves the tRNA(Pro)-independent hydrolysis of activated Ala-AMP. The other activity is designated 'posttransfer' editing and involves deacylation of mischarged Ala-tRNA(Pro). The misacylated Cys-tRNA(Pro) is not edited by ProRS. In Clostridium tetani (strain Massachusetts / E88), this protein is Proline--tRNA ligase.